The chain runs to 175 residues: PE-PGRS family protein PE_PGRS8 (175 aa).

Residues 1 to 93 (MSFVIAAPEA…AGSYAAAEAA (93 aa)) enclose the PE domain.

This sequence belongs to the mycobacterial PE family. PGRS subfamily.

The protein localises to the secreted. It localises to the cell wall. Its subcellular location is the cell surface. The sequence is that of PE-PGRS family protein PE_PGRS8 from Mycobacterium tuberculosis (strain ATCC 25618 / H37Rv).